Consider the following 268-residue polypeptide: Methionine aminopeptidase (268 aa).

His-79 lines the substrate pocket. Asp-97, Asp-108, and His-172 together coordinate a divalent metal cation. Substrate is bound at residue His-179. Residues Glu-205 and Glu-236 each contribute to the a divalent metal cation site.

Belongs to the peptidase M24A family. Methionine aminopeptidase type 1 subfamily. As to quaternary structure, monomer. Co(2+) serves as cofactor. Zn(2+) is required as a cofactor. Requires Mn(2+) as cofactor. It depends on Fe(2+) as a cofactor.

It carries out the reaction Release of N-terminal amino acids, preferentially methionine, from peptides and arylamides.. Removes the N-terminal methionine from nascent proteins. The N-terminal methionine is often cleaved when the second residue in the primary sequence is small and uncharged (Met-Ala-, Cys, Gly, Pro, Ser, Thr, or Val). Requires deformylation of the N(alpha)-formylated initiator methionine before it can be hydrolyzed. The sequence is that of Methionine aminopeptidase from Haemophilus influenzae (strain ATCC 51907 / DSM 11121 / KW20 / Rd).